Here is a 97-residue protein sequence, read N- to C-terminus: YcgL domain-containing protein PSEEN4034 (97 aa).

In terms of domain architecture, YcgL spans 3–87; the sequence is RICSIYKSPR…PDDDYIEHLP (85 aa).

This is YcgL domain-containing protein PSEEN4034 from Pseudomonas entomophila (strain L48).